Consider the following 397-residue polypeptide: MKLEDDKIHSPTNTEEEGYGSDVEVENGTDISGSKGGSGVELKRPDLKGSFRCSICSKVFCHSSSLSRHRMQAHFKSYKCTVCRKDISSSESLRTHMFKQHHISRMYMCRCCNWAFPDKSLLHIHLQTATNNNDSNNNNNSVIPHGVINRSCHLITDPFQLIRTPLLNLPTPQSLESSVPSLPIASIPIPALQSPIRSQPQTPSWLANLPKPIPTTAPIFVADSKEKIKDEVEKPDVYTSQSPTCSSVSFKSDLSAFHQLCSDRALISSPLIDTASPSSSSSSSRISPRHECFDCHVSRTKILISENKCKLLEHKIGTMQQESLEANAQMNGLEQTVLRLRMEAHALREHNELFQRKLLECQNLAVKFLQNDKAHDASEMNSFLRILINNTILTRPF.

Positions 1–40 (MKLEDDKIHSPTNTEEEGYGSDVEVENGTDISGSKGGSGV) are disordered. Positions 14 to 27 (TEEEGYGSDVEVEN) are enriched in acidic residues. 3 C2H2-type zinc fingers span residues 51-74 (FRCSICSKVFCHSSSLSRHRMQAH), 78-102 (YKCTVCRKDISSSESLRTHMFKQHH), and 107-125 (YMCRCCNWAFPDKSLLHIH).

The protein resides in the nucleus. In Caenorhabditis elegans, this protein is Zinc finger transcription factor family protein 30 (ztf-30).